The sequence spans 238 residues: MAVVTLSEMMEAGAHFGHQTRRWNPKMSRYIYCARNGVHIIDLVKTAVCMNSAYKWTRNAAKSGKRFLFVGTKKQASEVVALEANRCGASYVNQRWLGGMLTNWTTMKARIDRLKDLERMESSGAIAMRPKKEASVLRHELERLQKYLGGLKGMKRLPDVVVLVDQRRETNAVLEARKLDIPLVSMLDTNCDPDLCEVPIPCNDDAVRSVQLILGRLADAINEGRHGSNEHRGGQRLK.

Belongs to the universal ribosomal protein uS2 family.

The protein is Small ribosomal subunit protein uS2 of Prochlorococcus marinus (strain MIT 9211).